Reading from the N-terminus, the 342-residue chain is Ribosomal RNA small subunit methyltransferase C (342 aa).

This sequence belongs to the methyltransferase superfamily. RsmC family. As to quaternary structure, monomer.

It localises to the cytoplasm. It catalyses the reaction guanosine(1207) in 16S rRNA + S-adenosyl-L-methionine = N(2)-methylguanosine(1207) in 16S rRNA + S-adenosyl-L-homocysteine + H(+). In terms of biological role, specifically methylates the guanine in position 1207 of 16S rRNA in the 30S particle. This Salmonella arizonae (strain ATCC BAA-731 / CDC346-86 / RSK2980) protein is Ribosomal RNA small subunit methyltransferase C.